Reading from the N-terminus, the 133-residue chain is Cytochrome c-type biogenesis protein CcmE (133 aa).

Over 1–7 the chain is Cytoplasmic; it reads MKRKHKR. The chain crosses the membrane as a helical; Signal-anchor for type II membrane protein span at residues 8 to 28; that stretch reads LLFIIVTFIIFGSSVVIVLNK. Residues 29-133 are Periplasmic-facing; the sequence is LRSNISFFFT…NYKPGKYRAK (105 aa). Residues His-121 and Tyr-125 each coordinate heme.

Belongs to the CcmE/CycJ family.

It localises to the cell inner membrane. Its function is as follows. Heme chaperone required for the biogenesis of c-type cytochromes. Transiently binds heme delivered by CcmC and transfers the heme to apo-cytochromes in a process facilitated by CcmF and CcmH. The chain is Cytochrome c-type biogenesis protein CcmE from Ehrlichia canis (strain Jake).